The chain runs to 534 residues: MATALMAVVLRAAAVAPRLRGRGGTGGARRLSCGARRRAARGTSPGRRLSTAWSQPQPPPEEYAGADDVSQSPVAEEPSWVPSPRPPVPHESPEPPSGRSLVQRDIQAFLNQCGASPGEARHWLTQFQTCHHSADKPFAVIEVDEEVLKCQQGVSSLAFALAFLQRMDMKPLVVLGLPAPTAPSGCLSFWEAKAQLAKSCKVLVDALRHNAAAAVPFFGGGSVLRAAEPAPHASYGGIVSVETDLLQWCLESGSIPILCPIGETAARRSVLLDSLEVTASLAKALRPTKIIFLNNTGGLRDSSHKVLSNVNLPADLDLVCNAEWVSTKERQQMRLIVDVLSRLPHHSSAVITAASTLLTELFSNKGSGTLFKNAERMLRVRSLDKLDQGRLVDLVNASFGKKLRDDYLASLRPRLHSIYVSEGYNAAAILTMEPVLGGTPYLDKFVVSSSRQGQGSGQMLWECLRRDLQTLFWRSRVTNPINPWYFKHSDGSFSNKQWIFFWFGLADIRDSYELVNHAKGLPDSFHKPASDPGS.

The transit peptide at 1–18 directs the protein to the mitochondrion; it reads MATALMAVVLRAAAVAPR. Positions 19-99 are disordered; it reads LRGRGGTGGA…HESPEPPSGR (81 aa). An amino-acid kinase domain (AAK) region spans residues 19–376; that stretch reads LRGRGGTGGA…SGTLFKNAER (358 aa). Residues 81-96 are compositionally biased toward pro residues; the sequence is VPSPRPPVPHESPEPP. The region spanning 375 to 526 is the N-acetyltransferase domain; it reads ERMLRVRSLD…HAKGLPDSFH (152 aa). Residues K401, K444, and 474–479 contribute to the substrate site; that span reads RSRVTN.

The protein belongs to the acetyltransferase family. As to quaternary structure, homodimer. Homotetramer. In terms of processing, probably processed by mitochondrial processing peptidase (MPP). The long form has not yet been isolated. In terms of tissue distribution, highly expressed in the adult liver, kidney and small intestine. Weakly expressed in the fetal liver, lung, pancreas, placenta, heart and brain tissue.

Its subcellular location is the mitochondrion matrix. It carries out the reaction L-glutamate + acetyl-CoA = N-acetyl-L-glutamate + CoA + H(+). Its pathway is amino-acid biosynthesis; L-arginine biosynthesis; N(2)-acetyl-L-ornithine from L-glutamate: step 1/4. With respect to regulation, increased by L-arginine. Plays a role in the regulation of ureagenesis by producing the essential cofactor N-acetylglutamate (NAG), thus modulating carbamoylphosphate synthase I (CPS1) activity. This is N-acetylglutamate synthase, mitochondrial (NAGS) from Homo sapiens (Human).